Here is a 1010-residue protein sequence, read N- to C-terminus: Phosphatidylserine decarboxylase proenzyme 2 (1010 aa).

2 C2 domains span residues Met-1 to Glu-114 and Asp-247 to Cys-370. Ca(2+) contacts are provided by Asp-342, Ser-345, and Asp-348. Residues Leu-458–Asn-493 form the EF-hand domain. Active-site charge relay system; for autoendoproteolytic cleavage activity residues include Asp-734, His-793, and Ser-880. Ser-880 acts as the Schiff-base intermediate with substrate; via pyruvic acid; for decarboxylase activity in catalysis. Ser-880 bears the Pyruvic acid (Ser); by autocatalysis mark.

Belongs to the phosphatidylserine decarboxylase family. PSD-B subfamily. Eukaryotic type II sub-subfamily. As to quaternary structure, heterodimer of a large membrane-associated beta subunit and a small pyruvoyl-containing alpha subunit. Interacts with pstB2. This interaction may be a means to structurally tether the donor membrane (ER) harboring PstB2 to acceptor membranes (Golgi/endosomes) harboring PSD2 during PtdSer transport to the site of PtdEtn synthesis. The cofactor is pyruvate. Ca(2+) serves as cofactor. Post-translationally, is synthesized initially as an inactive proenzyme. Formation of the active enzyme involves a self-maturation process in which the active site pyruvoyl group is generated from an internal serine residue via an autocatalytic post-translational modification. Two non-identical subunits are generated from the proenzyme in this reaction, and the pyruvate is formed at the N-terminus of the alpha chain, which is derived from the carboxyl end of the proenzyme. The autoendoproteolytic cleavage occurs by a canonical serine protease mechanism, in which the side chain hydroxyl group of the serine supplies its oxygen atom to form the C-terminus of the beta chain, while the remainder of the serine residue undergoes an oxidative deamination to produce ammonia and the pyruvoyl prosthetic group on the alpha chain. During this reaction, the Ser that is part of the protease active site of the proenzyme becomes the pyruvoyl prosthetic group, which constitutes an essential element of the active site of the mature decarboxylase.

It is found in the golgi apparatus membrane. The protein localises to the endosome membrane. The enzyme catalyses a 1,2-diacyl-sn-glycero-3-phospho-L-serine + H(+) = a 1,2-diacyl-sn-glycero-3-phosphoethanolamine + CO2. It functions in the pathway phospholipid metabolism; phosphatidylethanolamine biosynthesis; phosphatidylethanolamine from CDP-diacylglycerol: step 2/2. In terms of biological role, catalyzes the formation of phosphatidylethanolamine (PtdEtn) from phosphatidylserine (PtdSer). Plays a central role in phospholipid metabolism and in the interorganelle trafficking of phosphatidylserine. In Komagataella phaffii (strain GS115 / ATCC 20864) (Yeast), this protein is Phosphatidylserine decarboxylase proenzyme 2.